An 833-amino-acid polypeptide reads, in one-letter code: Probable glucan 1,3-beta-glucosidase D (833 aa).

Positions 1–33 are enriched in basic and acidic residues; sequence MPTHSRSRDRYGGRDSDREARYDYDYARRRYAT. Residues 1 to 228 are disordered; that stretch reads MPTHSRSRDR…RKRQKKLAVV (228 aa). Topologically, residues 1 to 305 are cytoplasmic; it reads MPTHSRSRDR…GGRPFWKRKR (305 aa). Residues 34–45 are compositionally biased toward acidic residues; sequence DDDDDYDDDELE. 2 stretches are compositionally biased toward basic and acidic residues: residues 46–75 and 97–172; these read HDLTERRYRRDGYRPPRESRARGYYERDAE and YGDD…ETAA. The span at 183 to 196 shows a compositional bias: low complexity; sequence SASHLLSADALAKL. Residues 200 to 217 show a composition bias toward basic and acidic residues; that stretch reads YEKEERRKREIAKDAAKA. A helical; Signal-anchor for type II membrane protein transmembrane segment spans residues 306 to 326; sequence WIGLGALIIILVIVIPVAVVV. The Extracellular segment spans residues 327–833; it reads SKKHDNKSDP…PDFGDLPEYY (507 aa). Residues 331-353 are disordered; sequence DNKSDPADSQGTSPGKSNLDGLS. N-linked (GlcNAc...) asparagine glycosylation is present at N332. Residues 337–346 are compositionally biased toward polar residues; sequence ADSQGTSPGK. N-linked (GlcNAc...) asparagine glycans are attached at residues N378, N383, N395, N548, N560, and N569. The Proton donor role is filled by E599. Residues N638, N671, and N691 are each glycosylated (N-linked (GlcNAc...) asparagine). The active-site Nucleophile is the E704.

It belongs to the glycosyl hydrolase 5 (cellulase A) family.

It localises to the cell membrane. It catalyses the reaction Successive hydrolysis of beta-D-glucose units from the non-reducing ends of (1-&gt;3)-beta-D-glucans, releasing alpha-glucose.. In terms of biological role, glucosidase involved in the degradation of cellulosic biomass. Active on lichenan. The polypeptide is Probable glucan 1,3-beta-glucosidase D (exgD) (Aspergillus fumigatus (strain CBS 144.89 / FGSC A1163 / CEA10) (Neosartorya fumigata)).